A 103-amino-acid chain; its full sequence is ATP synthase F(0) complex subunit g, mitochondrial (103 aa).

At Ala-2 the chain carries N-acetylalanine. N6-acetyllysine is present on residues Lys-11, Lys-24, Lys-35, and Lys-54.

This sequence belongs to the ATPase g subunit family. As to quaternary structure, component of the ATP synthase complex composed at least of ATP5F1A/subunit alpha, ATP5F1B/subunit beta, ATP5MC1/subunit c (homooctomer), MT-ATP6/subunit a, MT-ATP8/subunit 8, ATP5ME/subunit e, ATP5MF/subunit f, ATP5MG/subunit g, ATP5MK/subunit k, ATP5MJ/subunit j, ATP5F1C/subunit gamma, ATP5F1D/subunit delta, ATP5F1E/subunit epsilon, ATP5PF/subunit F6, ATP5PB/subunit b, ATP5PD/subunit d, ATP5PO/subunit OSCP. ATP synthase complex consists of a soluble F(1) head domain (subunits alpha(3) and beta(3)) - the catalytic core - and a membrane F(0) domain - the membrane proton channel (subunits c, a, 8, e, f, g, k and j). These two domains are linked by a central stalk (subunits gamma, delta, and epsilon) rotating inside the F1 region and a stationary peripheral stalk (subunits F6, b, d, and OSCP).

It localises to the mitochondrion. The protein resides in the mitochondrion inner membrane. Functionally, subunit g, of the mitochondrial membrane ATP synthase complex (F(1)F(0) ATP synthase or Complex V) that produces ATP from ADP in the presence of a proton gradient across the membrane which is generated by electron transport complexes of the respiratory chain. ATP synthase complex consist of a soluble F(1) head domain - the catalytic core - and a membrane F(1) domain - the membrane proton channel. These two domains are linked by a central stalk rotating inside the F(1) region and a stationary peripheral stalk. During catalysis, ATP synthesis in the catalytic domain of F(1) is coupled via a rotary mechanism of the central stalk subunits to proton translocation. In vivo, can only synthesize ATP although its ATP hydrolase activity can be activated artificially in vitro. Part of the complex F(0) domain. This Mus musculus (Mouse) protein is ATP synthase F(0) complex subunit g, mitochondrial.